The sequence spans 94 residues: Putative pterin-4-alpha-carbinolamine dehydratase (94 aa).

Belongs to the pterin-4-alpha-carbinolamine dehydratase family.

It catalyses the reaction (4aS,6R)-4a-hydroxy-L-erythro-5,6,7,8-tetrahydrobiopterin = (6R)-L-erythro-6,7-dihydrobiopterin + H2O. This Mycobacterium sp. (strain JLS) protein is Putative pterin-4-alpha-carbinolamine dehydratase.